Consider the following 143-residue polypeptide: 3-hydroxyacyl-[acyl-carrier-protein] dehydratase FabZ (143 aa).

His48 is a catalytic residue.

The protein belongs to the thioester dehydratase family. FabZ subfamily.

The protein localises to the cytoplasm. It catalyses the reaction a (3R)-hydroxyacyl-[ACP] = a (2E)-enoyl-[ACP] + H2O. In terms of biological role, involved in unsaturated fatty acids biosynthesis. Catalyzes the dehydration of short chain beta-hydroxyacyl-ACPs and long chain saturated and unsaturated beta-hydroxyacyl-ACPs. This is 3-hydroxyacyl-[acyl-carrier-protein] dehydratase FabZ from Roseiflexus sp. (strain RS-1).